Here is a 231-residue protein sequence, read N- to C-terminus: Ribose-5-phosphate isomerase A (231 aa).

Residues 40–43, 93–96, and 106–109 contribute to the substrate site; these read TGST, DGAD, and KGGG. The active-site Proton acceptor is glutamate 115. Lysine 133 contributes to the substrate binding site.

This sequence belongs to the ribose 5-phosphate isomerase family. In terms of assembly, homodimer.

The enzyme catalyses aldehydo-D-ribose 5-phosphate = D-ribulose 5-phosphate. The protein operates within carbohydrate degradation; pentose phosphate pathway; D-ribose 5-phosphate from D-ribulose 5-phosphate (non-oxidative stage): step 1/1. Catalyzes the reversible conversion of ribose-5-phosphate to ribulose 5-phosphate. The chain is Ribose-5-phosphate isomerase A from Escherichia coli O1:K1 / APEC.